A 560-amino-acid polypeptide reads, in one-letter code: Long-chain-fatty-acid--CoA ligase (560 aa).

The protein belongs to the ATP-dependent AMP-binding enzyme family.

It carries out the reaction a long-chain fatty acid + ATP + CoA = a long-chain fatty acyl-CoA + AMP + diphosphate. This chain is Long-chain-fatty-acid--CoA ligase (lcfA), found in Bacillus subtilis (strain 168).